The following is a 274-amino-acid chain: NH(3)-dependent NAD(+) synthetase (274 aa).

Position 46–53 (46–53 (GISGGQDS)) interacts with ATP. Asp-52 provides a ligand contact to Mg(2+). Arg-140 lines the deamido-NAD(+) pocket. Thr-160 contributes to the ATP binding site. Glu-165 contributes to the Mg(2+) binding site. Lys-173 and Asp-180 together coordinate deamido-NAD(+). Residues Lys-189 and Thr-211 each contribute to the ATP site. Position 260 to 261 (260 to 261 (HK)) interacts with deamido-NAD(+).

It belongs to the NAD synthetase family. As to quaternary structure, homodimer.

The catalysed reaction is deamido-NAD(+) + NH4(+) + ATP = AMP + diphosphate + NAD(+) + H(+). Its pathway is cofactor biosynthesis; NAD(+) biosynthesis; NAD(+) from deamido-NAD(+) (ammonia route): step 1/1. In terms of biological role, catalyzes the ATP-dependent amidation of deamido-NAD to form NAD. Uses ammonia as a nitrogen source. This Streptococcus sanguinis (strain SK36) protein is NH(3)-dependent NAD(+) synthetase.